Here is a 121-residue protein sequence, read N- to C-terminus: Small ribosomal subunit protein bS6 (121 aa).

This sequence belongs to the bacterial ribosomal protein bS6 family.

In terms of biological role, binds together with bS18 to 16S ribosomal RNA. The polypeptide is Small ribosomal subunit protein bS6 (Pelagibacter ubique (strain HTCC1062)).